Here is a 335-residue protein sequence, read N- to C-terminus: UPF0324 membrane protein gbs1193 (335 aa).

The next 9 helical transmembrane spans lie at 20–42 (SWLLGLYLPLIGAPVFAILIGII), 57–79 (IAFTSKYILQTAVVLLGFGLNLM), 84–106 (VGISSLPIIIMTISISLIIAYVL), 116–138 (IATLIGVGSSICGGSAIAATAPV), 151–173 (SVIFLFNILAALIFPTLGNFIGL), 210–232 (GATIVKLTRTLAIIPITIVLSIY), 253–275 (VLYFILASLLTTIVASLGFSLRI), 285–304 (FFIVMAMGAIGINTNVSKLI), and 311–333 (ILLGAACWLGIIIVSLTMQAILG).

This sequence belongs to the UPF0324 family.

The protein resides in the cell membrane. The polypeptide is UPF0324 membrane protein gbs1193 (Streptococcus agalactiae serotype III (strain NEM316)).